A 660-amino-acid chain; its full sequence is UPF0603 protein MT2410 (660 aa).

The N-terminal stretch at 1–26 (MRLVRLLGMVLTILAAGLLLGPPAGA) is a signal peptide. Residues 162–182 (VVLLVTVGIIVIVVAVLLVVM) traverse the membrane as a helical segment. Positions 488–567 (DQLTKVDADL…LEAAHDRKSS (80 aa)) form a coiled coil. The helical transmembrane segment at 605-625 (GGNNAGAILGGIIIGDLLSGG) threads the bilayer. Residues 638–660 (FGGSSNAPGSSPDGGFLGGGGRF) are disordered.

It belongs to the UPF0603 family.

The protein resides in the cell membrane. May play a role in septum formation. This chain is UPF0603 protein MT2410, found in Mycobacterium tuberculosis (strain CDC 1551 / Oshkosh).